We begin with the raw amino-acid sequence, 87 residues long: Small ribosomal subunit protein bS20 (87 aa).

Residues Met-1–Met-27 are disordered.

Belongs to the bacterial ribosomal protein bS20 family.

Its function is as follows. Binds directly to 16S ribosomal RNA. The protein is Small ribosomal subunit protein bS20 of Pectobacterium carotovorum subsp. carotovorum (strain PC1).